A 109-amino-acid polypeptide reads, in one-letter code: Large ribosomal subunit protein eL30 (109 aa).

Belongs to the eukaryotic ribosomal protein eL30 family.

The polypeptide is Large ribosomal subunit protein eL30 (Methanopyrus kandleri (strain AV19 / DSM 6324 / JCM 9639 / NBRC 100938)).